The chain runs to 555 residues: Phosphoglucomutase (555 aa).

Substrate-binding positions include T45, R49, 148–149 (SH), and K158. S148 serves as the catalytic Phosphoserine intermediate. A Mg(2+)-binding site is contributed by S148. Mg(2+) is bound by residues D306, D308, and D310. Substrate-binding positions include 310–311 (DR) and 393–395 (EES).

This sequence belongs to the phosphohexose mutase family. It depends on Mg(2+) as a cofactor.

It carries out the reaction alpha-D-glucose 1-phosphate = alpha-D-glucose 6-phosphate. Functionally, this enzyme participates in both the breakdown and synthesis of glucose. This is Phosphoglucomutase (celB) from Komagataeibacter xylinus (Gluconacetobacter xylinus).